We begin with the raw amino-acid sequence, 401 residues long: Tyrosine--tRNA ligase (401 aa).

Residues proline 45–histidine 54 carry the 'HIGH' region motif. Positions lysine 230 to serine 234 match the 'KMSKS' region motif. Residue lysine 233 coordinates ATP. Positions isoleucine 339 to valine 399 constitute an S4 RNA-binding domain.

This sequence belongs to the class-I aminoacyl-tRNA synthetase family. TyrS type 2 subfamily. In terms of assembly, homodimer.

It localises to the cytoplasm. It carries out the reaction tRNA(Tyr) + L-tyrosine + ATP = L-tyrosyl-tRNA(Tyr) + AMP + diphosphate + H(+). Functionally, catalyzes the attachment of tyrosine to tRNA(Tyr) in a two-step reaction: tyrosine is first activated by ATP to form Tyr-AMP and then transferred to the acceptor end of tRNA(Tyr). The protein is Tyrosine--tRNA ligase of Campylobacter jejuni (strain RM1221).